We begin with the raw amino-acid sequence, 173 residues long: Large ribosomal subunit protein uL10 (173 aa).

The protein belongs to the universal ribosomal protein uL10 family. In terms of assembly, part of the ribosomal stalk of the 50S ribosomal subunit. The N-terminus interacts with L11 and the large rRNA to form the base of the stalk. The C-terminus forms an elongated spine to which L12 dimers bind in a sequential fashion forming a multimeric L10(L12)X complex.

Functionally, forms part of the ribosomal stalk, playing a central role in the interaction of the ribosome with GTP-bound translation factors. The sequence is that of Large ribosomal subunit protein uL10 from Christiangramia forsetii (strain DSM 17595 / CGMCC 1.15422 / KT0803) (Gramella forsetii).